Reading from the N-terminus, the 189-residue chain is Translation initiation factor IF-3 (189 aa).

The protein belongs to the IF-3 family. Monomer.

It is found in the cytoplasm. IF-3 binds to the 30S ribosomal subunit and shifts the equilibrium between 70S ribosomes and their 50S and 30S subunits in favor of the free subunits, thus enhancing the availability of 30S subunits on which protein synthesis initiation begins. This Corynebacterium glutamicum (strain R) protein is Translation initiation factor IF-3.